The sequence spans 438 residues: Enolase (438 aa).

Histidine 159 and glutamate 168 together coordinate substrate. Glutamate 211 serves as the catalytic Proton donor. Aspartate 246, glutamate 297, and aspartate 322 together coordinate Mg(2+). Substrate contacts are provided by glutamate 297 and aspartate 322. The active-site Proton acceptor is lysine 347. Substrate-binding positions include 374–377 (SHRS) and lysine 398.

The protein belongs to the enolase family. In terms of assembly, homodimer. The cofactor is Mg(2+).

The protein localises to the cytoplasm. The enzyme catalyses (2R)-2-phosphoglycerate = phosphoenolpyruvate + H2O. It participates in carbohydrate degradation; glycolysis; pyruvate from D-glyceraldehyde 3-phosphate: step 4/5. This chain is Enolase (ENO1), found in Cryphonectria parasitica (Chestnut blight fungus).